The chain runs to 161 residues: DNA-directed RNA polymerase 18 kDa subunit (161 aa).

The protein belongs to the poxviridae DNA-directed RNA polymerase 18 kDa subunit family. The DNA-dependent RNA polymerase used for intermediate and late genes expression consists of eight subunits Rpo30/OPG66, Rpo7/OPG90, Rpo22/OPG103, Rpo147/OPG105, Rpo18/OPG119, Rpo19/OPG131, Rpo132/OPG151 and Rpo35/OPG156. The same holoenzyme, with the addition of the transcription-specificity factor OPG109, is used for early gene expression.

The protein resides in the virion. The catalysed reaction is RNA(n) + a ribonucleoside 5'-triphosphate = RNA(n+1) + diphosphate. Functionally, part of the DNA-dependent RNA polymerase which catalyzes the transcription of viral DNA into RNA using the four ribonucleoside triphosphates as substrates. Responsible for the transcription of early, intermediate and late genes. DNA-dependent RNA polymerase associates with the early transcription factor (ETF), itself composed of OPG118 and OPG133, thereby allowing the early genes transcription. Late transcription, and probably also intermediate transcription, require newly synthesized RNA polymerase. The polypeptide is DNA-directed RNA polymerase 18 kDa subunit (OPG119) (Vaccinia virus (strain Copenhagen) (VACV)).